Consider the following 169-residue polypeptide: U3 small nucleolar ribonucleoprotein protein imp3 (169 aa).

Positions Arg109–Ile166 constitute an S4 RNA-binding domain.

The protein belongs to the universal ribosomal protein uS4 family. Component of a heterotrimeric complex containing imp3, imp4 and mpp10.

It is found in the nucleus. It localises to the nucleolus. Its function is as follows. Component of the U3 small nucleolar ribonucleoprotein. Required for the early cleavages at sites A0, A1 and A2 during 18S ribosomal pre-RNA processing. This is U3 small nucleolar ribonucleoprotein protein imp3 (RBP) from Pneumocystis carinii.